The following is a 245-amino-acid chain: Demethylmenaquinone methyltransferase (245 aa).

S-adenosyl-L-methionine is bound by residues threonine 58, aspartate 79, and 106 to 107 (NA).

This sequence belongs to the class I-like SAM-binding methyltransferase superfamily. MenG/UbiE family.

It carries out the reaction a 2-demethylmenaquinol + S-adenosyl-L-methionine = a menaquinol + S-adenosyl-L-homocysteine + H(+). Its pathway is quinol/quinone metabolism; menaquinone biosynthesis; menaquinol from 1,4-dihydroxy-2-naphthoate: step 2/2. Methyltransferase required for the conversion of demethylmenaquinol (DMKH2) to menaquinol (MKH2). The polypeptide is Demethylmenaquinone methyltransferase (Halalkalibacterium halodurans (strain ATCC BAA-125 / DSM 18197 / FERM 7344 / JCM 9153 / C-125) (Bacillus halodurans)).